The sequence spans 547 residues: MDPIELRSVNIEPYEDSCSVDSIQSCYTGMGNSEKGAMDSQFANEDAESQKFLTNGFLGKKTLTDYADEHHPGTTSFGMSSFNLSNAIMGSGILGLSYAMANTGIVLFVIMLLTVAILSLYSVHLLLKTAKEGGSLIYEKLGEKAFGWPGKIGAFISITMQNIGAMSSYLFIIKYELPEVIRVFMGLEENTGEWYLNGNYLVLFVSVGIILPLSLLKNLGYLGYTSGFSLTCMVFFVSVVIYKKFQIPCPLPVLDHNNGNLTFNNTLPMHVIMLPNNSESTGMNFMVDYTHRDPEGLDEKPAAGPLHGSGVEYEAHSGDKCQPKYFVFNSRTAYAIPILAFAFVCHPEVLPIYSELKDRSRRKMQTVSNISITGMLVMYLLAALFGYLSFYGEVEDELLHAYSKVYTFDTALLMVRLAVLVAVTLTVPIVLFPIRTSVITLLFPRRPFSWVKHFGIAAIIIALNNVLVILVPTIKYIFGFIGASSATMLIFILPAAFYLKLVKKEPLRSPQKIGALVFLVTGIIFMMGSMALIIIDWIYNPPNPDHH.

Residues 1–104 are Extracellular-facing; the sequence is MDPIELRSVN…GLSYAMANTG (104 aa). Ser-49 is subject to Phosphoserine. Residues 105-125 traverse the membrane as a helical segment; sequence IVLFVIMLLTVAILSLYSVHL. The Cytoplasmic segment spans residues 126–151; sequence LLKTAKEGGSLIYEKLGEKAFGWPGK. A helical transmembrane segment spans residues 152–172; it reads IGAFISITMQNIGAMSSYLFI. Topologically, residues 173–195 are extracellular; sequence IKYELPEVIRVFMGLEENTGEWY. A helical membrane pass occupies residues 196–216; it reads LNGNYLVLFVSVGIILPLSLL. Over 217 to 220 the chain is Cytoplasmic; sequence KNLG. Residues 221-241 traverse the membrane as a helical segment; that stretch reads YLGYTSGFSLTCMVFFVSVVI. The Extracellular segment spans residues 242–332; sequence YKKFQIPCPL…PKYFVFNSRT (91 aa). Residues Cys-249 and Cys-321 are joined by a disulfide bond. Residues Asn-260, Asn-264, and Asn-276 are each glycosylated (N-linked (GlcNAc...) asparagine). A helical transmembrane segment spans residues 333 to 353; it reads AYAIPILAFAFVCHPEVLPIY. Topologically, residues 354–369 are cytoplasmic; that stretch reads SELKDRSRRKMQTVSN. Residues 370 to 390 traverse the membrane as a helical segment; it reads ISITGMLVMYLLAALFGYLSF. At 391–411 the chain is on the extracellular side; that stretch reads YGEVEDELLHAYSKVYTFDTA. The helical transmembrane segment at 412–432 threads the bilayer; it reads LLMVRLAVLVAVTLTVPIVLF. Residues 433–453 lie on the Cytoplasmic side of the membrane; it reads PIRTSVITLLFPRRPFSWVKH. Residues 454 to 474 form a helical membrane-spanning segment; the sequence is FGIAAIIIALNNVLVILVPTI. Residues 475–476 lie on the Extracellular side of the membrane; it reads KY. Residues 477 to 497 form a helical membrane-spanning segment; it reads IFGFIGASSATMLIFILPAAF. Residues 498 to 514 lie on the Cytoplasmic side of the membrane; the sequence is YLKLVKKEPLRSPQKIG. A helical membrane pass occupies residues 515–535; the sequence is ALVFLVTGIIFMMGSMALIII. The Extracellular segment spans residues 536 to 547; the sequence is DWIYNPPNPDHH.

The protein belongs to the amino acid/polyamine transporter 2 family. Post-translationally, the disulfide bond plays an important role in substrate transport, but has no effect on trafficking to the cell surface. In terms of tissue distribution, expressed predominantly in liver, and at lower level in skeletal muscle.

Its subcellular location is the cell membrane. The protein resides in the cell projection. It localises to the microvillus membrane. It catalyses the reaction L-alanine(in) + Na(+)(in) = L-alanine(out) + Na(+)(out). It carries out the reaction L-serine(in) + Na(+)(in) = L-serine(out) + Na(+)(out). The catalysed reaction is glycine(in) + Na(+)(in) = glycine(out) + Na(+)(out). The enzyme catalyses L-cysteine(in) + Na(+)(in) = L-cysteine(out) + Na(+)(out). It catalyses the reaction L-asparagine(in) + Na(+)(in) = L-asparagine(out) + Na(+)(out). It carries out the reaction L-threonine(in) + Na(+)(in) = L-threonine(out) + Na(+)(out). The catalysed reaction is L-proline(in) + Na(+)(in) = L-proline(out) + Na(+)(out). The enzyme catalyses L-methionine(in) + Na(+)(in) = L-methionine(out) + Na(+)(out). It catalyses the reaction L-glutamine(in) + Na(+)(in) = L-glutamine(out) + Na(+)(out). It carries out the reaction L-histidine(in) + Na(+)(in) = L-histidine(out) + Na(+)(out). In terms of biological role, symporter that cotransports neutral amino acids and sodium ions from the extraccellular to the intracellular side of the cell membrane. The transport is electrogenic, pH dependent and partially tolerates substitution of Na(+) by Li(+). Preferentially transports smaller amino acids, such as glycine, L-alanine, L-serine, L-asparagine and L-threonine, followed by L-cysteine, L-histidine, L-proline and L-glutamine and L-methionine. The polypeptide is Sodium-coupled neutral amino acid transporter 4 (Rattus norvegicus (Rat)).